The following is a 258-amino-acid chain: Hydroxyacylglutathione hydrolase (258 aa).

His54, His56, Asp58, His59, His113, Asp138, and His176 together coordinate Zn(2+).

The protein belongs to the metallo-beta-lactamase superfamily. Glyoxalase II family. Monomer. Zn(2+) is required as a cofactor.

The enzyme catalyses an S-(2-hydroxyacyl)glutathione + H2O = a 2-hydroxy carboxylate + glutathione + H(+). The protein operates within secondary metabolite metabolism; methylglyoxal degradation; (R)-lactate from methylglyoxal: step 2/2. In terms of biological role, thiolesterase that catalyzes the hydrolysis of S-D-lactoyl-glutathione to form glutathione and D-lactic acid. This is Hydroxyacylglutathione hydrolase from Synechococcus sp. (strain ATCC 27144 / PCC 6301 / SAUG 1402/1) (Anacystis nidulans).